The chain runs to 354 residues: Cellular communication network factor 6 (354 aa).

The N-terminal stretch at 1–23 is a signal peptide; that stretch reads MQGLLFSTLLLAGLAQFCCRVQG. The 74-residue stretch at 44–117 folds into the IGFBP N-terminal domain; it reads RKQFCHWPCK…RYETGVCAYL (74 aa). Cystine bridges form between cysteine 48-cysteine 72, cysteine 52-cysteine 74, cysteine 54-cysteine 75, cysteine 61-cysteine 78, cysteine 86-cysteine 100, and cysteine 92-cysteine 114. N-linked (GlcNAc...) asparagine glycosylation occurs at asparagine 178. Residues 208-253 enclose the TSP type-1 domain; sequence KCLVQATKWTPCSRTCGMGISNRVTNENSNCEMRKEKRLCYIQPCD. 5 disulfide bridges follow: cysteine 268/cysteine 305, cysteine 285/cysteine 319, cysteine 296/cysteine 335, cysteine 299/cysteine 337, and cysteine 304/cysteine 341. Residues 268 to 342 form the CTCK domain; it reads CQPTFQLSKA…TSCVCQRNCR (75 aa). N-linked (GlcNAc...) asparagine glycosylation occurs at asparagine 308.

Belongs to the CCN family. As to expression, predominant expression in adult kidney and testis and fetal kidney. Weaker expression found in placenta, ovary, prostate and small intestine. Also expressed in skeletally-derived cells such as synoviocytes and articular cartilage chondrocytes.

It is found in the secreted. The protein resides in the mitochondrion. In terms of biological role, plays a role in mitochondrial electron transport and mitochondrial respiration. Through its regulation of the mitochondrial function may play a role in normal postnatal skeletal growth and cartilage homeostasis. The chain is Cellular communication network factor 6 from Homo sapiens (Human).